The sequence spans 203 residues: Arcadin-2 (203 aa).

Interacts with crenactin.

It localises to the cytoplasm. Its subcellular location is the cytoskeleton. Part of an actin-like archaeal cytoskeleton. Prevents polymerization of crenactin filaments by binding its C-terminus into crenactin's hydrophobic groove. May act by competing with the D-loop of the following crenactin subunit for the hydrophobic groove. This is Arcadin-2 from Pyrobaculum calidifontis (strain DSM 21063 / JCM 11548 / VA1).